Consider the following 95-residue polypeptide: Small ribosomal subunit protein uS19 (95 aa).

It belongs to the universal ribosomal protein uS19 family.

In terms of biological role, protein S19 forms a complex with S13 that binds strongly to the 16S ribosomal RNA. This is Small ribosomal subunit protein uS19 from Syntrophobacter fumaroxidans (strain DSM 10017 / MPOB).